The chain runs to 448 residues: C4-dicarboxylate transport protein (448 aa).

The next 8 membrane-spanning stretches (helical) occupy residues 20-38 (LYFQ…GHFY), 53-75 (IRLV…IAGM), 88-110 (AMIY…ANTV), 161-178 (ILQV…LGIV), 199-220 (LVAI…FTIG), 230-252 (LAML…LGAV), 325-347 (LFIA…LLVA), and 362-384 (FITL…ALIL).

Belongs to the dicarboxylate/amino acid:cation symporter (DAACS) (TC 2.A.23) family.

The protein resides in the cell inner membrane. In terms of biological role, responsible for the transport of dicarboxylates such as succinate, fumarate, and malate from the periplasm across the membrane. The protein is C4-dicarboxylate transport protein of Agrobacterium fabrum (strain C58 / ATCC 33970) (Agrobacterium tumefaciens (strain C58)).